Consider the following 220-residue polypeptide: MNEDNHESSSSGCDNQIEFLVSEAEQRRRRVNHLDTEVHGLGYDPFSYCGRRVHVLLLTKLISVLTIPFYVAIIIFISFFGNATSVMFSVIILGSVLISTCYGAFRGAKMCLIPFVIIQLVFLIYDLILITILLLAVVFPKMFLSALLRLPLEDIPFGTDQVLLGCSLLLALLLAPLVWTTHVVYIDFLFISQVDETLHMLKEANQKVSQDDVSPNRMMF.

Transmembrane regions (helical) follow at residues 61 to 81, 85 to 105, 115 to 135, and 150 to 170; these read LISV…SFFG, SVMF…YGAF, FVII…ILLL, and LPLE…SLLL.

The protein localises to the membrane. This is an uncharacterized protein from Caenorhabditis elegans.